We begin with the raw amino-acid sequence, 186 residues long: Secreted chorismate mutase (186 aa).

Positions 1-30 are cleaved as a signal peptide; it reads MQPTHTLTRLTVIGKLIIASSFFLSLAVQA. A Chorismate mutase domain is found at 31–107; that stretch reads QQCGQTAPLI…AAKAIQYRYR (77 aa). The cysteines at positions 33 and 148 are disulfide-linked. Residues Arg-43, Lys-54, Asp-63, 99 to 103, and Arg-127 contribute to the substrate site; that span reads AKAIQ.

As to quaternary structure, homodimer.

The protein resides in the periplasm. It catalyses the reaction chorismate = prephenate. It participates in metabolic intermediate biosynthesis; prephenate biosynthesis; prephenate from chorismate: step 1/1. Functionally, catalyzes the Claisen rearrangement of chorismate to prephenate. May play some role in the pathogenicity. In Yersinia pestis, this protein is Secreted chorismate mutase (pheA2).